The chain runs to 181 residues: Adenylate kinase (181 aa).

Position 10–15 (10–15) interacts with ATP; that stretch reads GAGKGT. The tract at residues 30 to 59 is NMP; the sequence is STGDLFRANIGEGTPLGKEAKSYIDAGKLV. Residues Thr31, Arg36, 57 to 59, 85 to 88, and Gln92 contribute to the AMP site; these read KLV and GFPR. The LID stretch occupies residues 126–132; that stretch reads ARGRADD. Arg127 provides a ligand contact to ATP. Residues Arg129 and Arg140 each coordinate AMP. Gly166 provides a ligand contact to ATP.

Belongs to the adenylate kinase family. Monomer.

The protein localises to the cytoplasm. It catalyses the reaction AMP + ATP = 2 ADP. It functions in the pathway purine metabolism; AMP biosynthesis via salvage pathway; AMP from ADP: step 1/1. Functionally, catalyzes the reversible transfer of the terminal phosphate group between ATP and AMP. Plays an important role in cellular energy homeostasis and in adenine nucleotide metabolism. This Corynebacterium diphtheriae (strain ATCC 700971 / NCTC 13129 / Biotype gravis) protein is Adenylate kinase.